Consider the following 555-residue polypeptide: Probable Xaa-Pro aminopeptidase BC1G_13431 (555 aa).

Mn(2+) contacts are provided by Asp303, Asp314, Glu458, and Glu499. The segment at 527 to 555 (EGKEQEEEEEREANRKATESRKQKKTWFW) is disordered. A compositionally biased stretch (basic and acidic residues) spans 538–547 (EANRKATESR).

This sequence belongs to the peptidase M24B family. The cofactor is Mn(2+).

It carries out the reaction Release of any N-terminal amino acid, including proline, that is linked to proline, even from a dipeptide or tripeptide.. In terms of biological role, catalyzes the removal of a penultimate prolyl residue from the N-termini of peptides. The polypeptide is Probable Xaa-Pro aminopeptidase BC1G_13431 (Botryotinia fuckeliana (strain B05.10) (Noble rot fungus)).